The primary structure comprises 85 residues: Sodium channel neurotoxin MeuNaTxalpha-1 (85 aa).

The first 19 residues, 1-19, serve as a signal peptide directing secretion; it reads MNSLVMISLALLVMTGVES. Residues 21–83 enclose the LCN-type CS-alpha/beta domain; the sequence is RDGYIADDKN…VPIKVSGKCN (63 aa). The specificity module, loop 1 stretch occupies residues 27–31; it reads DDKNC. Intrachain disulfides connect Cys31-Cys82, Cys35-Cys55, Cys41-Cys65, and Cys45-Cys67. Specificity module, loop regions lie at residues 58–62 and 75–83; these read AGQYG and PIKVSGKCN. Asn83 is subject to Asparagine amide.

Belongs to the long (4 C-C) scorpion toxin superfamily. Sodium channel inhibitor family. Alpha subfamily. Post-translationally, C-terminal amidation does not appear to play an important role in activity, since the non-amidated recombinant toxin and the native toxin (which is amidated) show similar activities on all sodium channels tested. In terms of tissue distribution, expressed by the venom gland.

Its subcellular location is the secreted. Alpha toxins bind voltage-independently at site-3 of sodium channels (Nav) and inhibit the inactivation of the activated channels, thereby blocking neuronal transmission. This toxin inhibits inactivation of Nav1.6/SCN8A (EC(50)=3.1 uM) and drosophila DmNav1 (EC(50)=1.17 uM). It also shows a weak inhibition of inactivation on Nav1.2/SCN2A Nav1.3/SCN3A, and Nav1.7/SCN9A. The toxin (1 uM) does not significantly shift the midpoint of activation at the two channels, but induces a significant depolarizing shift in the V(1/2) of inactivation of the channels. The toxin has also been shown to dose-dependently stimulates intracellular signaling in DRG neurons through activation of two kinases (type II protein kinase A (PKA-II) and MAP kinases 1/3 (MAPK1/MAPK3)). Nav1.2/SCN2A is strongly suggested to be the target channel predominantly involved in this activation. In vivo, the toxin induces a dose-dependent thermal hyperalgesia lasting 30-45 minutes. This is Sodium channel neurotoxin MeuNaTxalpha-1 from Mesobuthus eupeus (Lesser Asian scorpion).